Consider the following 1699-residue polypeptide: Hybrid signal transduction histidine kinase E (1699 aa).

Disordered regions lie at residues 1-32 and 58-97; these read MDKL…NLEN and NNII…NPNV. Over residues 7–32 the composition is skewed to low complexity; sequence NNNLSPPSSPSSSTTTPNLSSTNLEN. The next 6 membrane-spanning stretches (helical) occupy residues 142–162, 164–184, 191–211, 238–258, 262–282, and 295–315; these read CILL…LIFL, SFYP…IVST, LVAL…FLQI, LNFL…IFFP, FSIT…LISI, and NLIV…ILSI. The segment covering 412–432 has biased composition (polar residues); the sequence is ITNGGNNKQTSTTSANSTPRY. Disordered stretches follow at residues 412–439 and 542–593; these read ITNG…NNNN and LLNN…NISN. A compositionally biased stretch (low complexity) spans 544-593; that stretch reads NNNNNNNNNNNNNNNNNNNNNNNNNNSNNNNNNNSNNNNNNNNINNNISN. One can recognise a Histidine kinase domain in the interval 678–950; it reads TVSHEVRTPI…AFSFTSILST (273 aa). The residue at position 681 (His-681) is a Phosphohistidine; by autocatalysis. 5 disordered regions span residues 819–866, 1018–1054, 1186–1239, 1252–1294, and 1351–1406; these read NNNN…NNNN, NNNN…NDNN, KKQQ…RKSS, MVQV…NPNN, and SIPI…SPPP. Polar residues predominate over residues 1198–1212; the sequence is MGDTLSSTKSPQYTN. Residues 1219–1239 show a composition bias toward low complexity; sequence SSSSNGSLNKSNRSNLLRKSS. Residues 1271–1282 are compositionally biased toward polar residues; the sequence is KGNNSNPNSTEL. Composition is skewed to low complexity over residues 1283-1294 and 1355-1392; these read NSTNSVNGNPNN and NINN…NNNN. Positions 1575–1695 constitute a Response regulatory domain; the sequence is NALIVDDTEL…TLKDTLLKWG (121 aa). Position 1625 is a 4-aspartylphosphate (Asp-1625).

It localises to the membrane. The enzyme catalyses ATP + protein L-histidine = ADP + protein N-phospho-L-histidine.. In terms of biological role, may act in a signal transduction pathway. This protein undergoes an ATP-dependent autophosphorylation at a conserved histidine residue in the kinase core, and a phosphoryl group is then transferred to a conserved aspartate residue in the receiver domain. The chain is Hybrid signal transduction histidine kinase E (dhkE) from Dictyostelium discoideum (Social amoeba).